Here is a 256-residue protein sequence, read N- to C-terminus: Transcription factor BHLH094 (256 aa).

Residues 1–125 (MDPAPSLAAE…TPPEPPKQDY (125 aa)) form a disordered region. Positions 79 to 97 (PEAKRLKPMKSSDKNDSLR) are enriched in basic and acidic residues. The interval 134–147 (QATDSHSLAERARR) is basic motif; degenerate. The bHLH domain maps to 134-184 (QATDSHSLAERARREKISERMKILQDLVPGCNKVIGKASVLDEIINYIQSL). The segment at 148-184 (EKISERMKILQDLVPGCNKVIGKASVLDEIINYIQSL) is helix-loop-helix motif.

The protein belongs to the bHLH protein family. As to quaternary structure, interacts with RSS3. Forms a ternary complex with RSS3 and TIFY11A/JAZ9 in the nucleus.

It localises to the nucleus. In terms of biological role, transcription factor that forms a ternary complex with RSS3 and TIFY11A/JAZ9 to negatively regulate jasmonate-responsive genes. The chain is Transcription factor BHLH094 from Oryza sativa subsp. japonica (Rice).